The primary structure comprises 480 residues: Speriolin (480 aa).

Residues 1 to 76 (MSLLTSYEGL…HQGVFLPPAS (76 aa)) are necessary for targeting to centrosomes. The stretch at 2-45 (SLLTSYEGLRHQIERLVRENEELKKLVRLIRENQELKSAIKTQA) forms a coiled coil. Disordered stretches follow at residues 252 to 297 (INNI…SRVM) and 305 to 324 (VEME…DNPR).

It belongs to the speriolin family. In terms of assembly, found in a complex with CDC20, CDC27 and TUBG1. Interacts with CDC20. Expressed in testis. Expressed in pachyten spermatocytes, spermatids and epididymal sperm (at protein level).

The protein localises to the cytoplasm. It is found in the cytoskeleton. The protein resides in the microtubule organizing center. Its subcellular location is the centrosome. The chain is Speriolin (Spatc1) from Mus musculus (Mouse).